The primary structure comprises 420 residues: Cytochrome P-450 monooxygenase DoxA (420 aa).

Position 367 (Cys-367) interacts with heme.

The protein belongs to the cytochrome P450 family. Monomer. Heme is required as a cofactor.

The protein resides in the cytoplasm. It catalyses the reaction 13-deoxydaunorubicin + NADPH + O2 + H(+) = 13-dihydrodaunorubicin + NADP(+) + H2O. The enzyme catalyses 13-dihydrodaunorubicin + NADPH + O2 + H(+) = daunorubicin + NADP(+) + 2 H2O. It carries out the reaction 13-deoxycarminomycin + NADPH + O2 + H(+) = 13-dihydrocarminomycin + NADP(+) + H2O. The catalysed reaction is 13-dihydrocarminomycin + NADPH + O2 + H(+) = carminomycin + NADP(+) + 2 H2O. It catalyses the reaction daunorubicin + NADPH + O2 + H(+) = doxorubicin + NADP(+) + H2O. The protein operates within antibiotic biosynthesis; daunorubicin biosynthesis. It functions in the pathway antibiotic biosynthesis; carminomycin biosynthesis. It participates in antibiotic biosynthesis; doxorubicin biosynthesis. Its function is as follows. Involved in the biosynthesis of the anthracyclines carminomycin, daunorubicin (daunomycin) and doxorubicin (adriamycin) which are aromatic polyketide antibiotics that exhibit high cytotoxicity and are widely applied in the chemotherapy of a variety of cancers. In vivo, DoxA catalyzes the C-13 hydroxylation of 13-deoxycarminomycin and 13-deoxydaunorubicin to yield 13-dihydrocarminomycin and 13-dihydrodaunorubicin, respectively, as well as the oxidation of these 13-dihydro-anthracyclines to their respective 13-keto forms, carminomycin and daunorubicin. In vivo, it also catalyzes the C-14 hydroxylation of daunorubicin to form doxorubicin. It can only use NADP. DoxA acts jointly with DnrV. The protein is Cytochrome P-450 monooxygenase DoxA (doxA) of Streptomyces peucetius subsp. caesius.